A 152-amino-acid chain; its full sequence is Interleukin-3 (152 aa).

Residues 1–19 (MSRLPVLLLLQLLVRPGLQ) form the signal peptide. N-linked (GlcNAc...) asparagine glycosylation is found at asparagine 34 and asparagine 89. Cysteine 35 and cysteine 103 are disulfide-bonded.

The protein belongs to the IL-3 family. In terms of assembly, monomer. In terms of tissue distribution, activated T-cells, mast cells, natural killer cells.

The protein resides in the secreted. Functionally, granulocyte/macrophage colony-stimulating factors are cytokines that act in hematopoiesis by controlling the production, differentiation, and function of 2 related white cell populations of the blood, the granulocytes and the monocytes-macrophages. This CSF induces granulocytes, macrophages, mast cells, stem cells, erythroid cells, eosinophils and megakaryocytes. The sequence is that of Interleukin-3 (IL3) from Pan troglodytes (Chimpanzee).